The chain runs to 158 residues: uncharacterized protein (158 aa).

Helical transmembrane passes span 66-86 (LLII…PWIM) and 94-114 (FFSL…SLTI).

It is found in the membrane. This is an uncharacterized protein from Saccharomyces cerevisiae (strain ATCC 204508 / S288c) (Baker's yeast).